The following is a 160-amino-acid chain: MYTITKGPSKLVAQRRTGPTQQQVEGRLGELLKCRQPAPPTSQPPRAQPFAQPPGPWPLSSPGPRLVFNRVNGRRAPSTSPSFEGTQETYTVAHEENVRFVSEAWQQVQQQLDGGPAGEGGPRPVQYVERTPNPRLQNFVPIDLDEWWAQQFLARITSCS.

An N-acetylmethionine modification is found at methionine 1. The tract at residues 1–64 (MYTITKGPSK…GPWPLSSPGP (64 aa)) is disordered. Arginine 35 bears the Omega-N-methylarginine mark. Residues 37-61 (PAPPTSQPPRAQPFAQPPGPWPLSS) are compositionally biased toward pro residues. Phosphoserine is present on serine 61. Residue arginine 65 is modified to Omega-N-methylarginine. Position 82 is a phosphoserine (serine 82).

The protein belongs to the MCRIP family. Interacts with DDX6. Interacts with MCRIP1.

The protein resides in the cytoplasm. Its subcellular location is the stress granule. It is found in the nucleus. This chain is MAPK regulated corepressor interacting protein 2 (MCRIP2), found in Homo sapiens (Human).